The primary structure comprises 54 residues: Small ribosomal subunit protein uS14 (54 aa).

4 residues coordinate Zn(2+): C19, C22, C37, and C40.

The protein belongs to the universal ribosomal protein uS14 family. Zinc-binding uS14 subfamily. In terms of assembly, part of the 30S ribosomal subunit. The cofactor is Zn(2+).

Functionally, binds 16S rRNA, required for the assembly of 30S particles. The polypeptide is Small ribosomal subunit protein uS14 (Sulfolobus acidocaldarius (strain ATCC 33909 / DSM 639 / JCM 8929 / NBRC 15157 / NCIMB 11770)).